Reading from the N-terminus, the 462-residue chain is Cell wall mannoprotein 1 (462 aa).

An N-terminal signal peptide occupies residues 1 to 18; the sequence is MKFLSSLVVLGLSAQALA. Ser-313 contributes to the hexadecanoate binding site. The disordered stretch occupies residues 346 to 429; sequence FAGTGPAPTT…SVPAAPTGGN (84 aa). The span at 347–366 shows a compositional bias: low complexity; it reads AGTGPAPTTSSTPEASTAPA. The segment covering 399–420 has biased composition (polar residues); the sequence is VWPTSTTASPDVQPTITSSGTS.

The protein belongs to the cell wall mannoprotein 1 family. Monomer. Mannoprotein, glycosylated.

The protein resides in the secreted. It localises to the cell wall. Constitutive protein of the cell wall. Binds fatty acids and may thus serve as a fatty acid transporter between P.marneffei and host cells during infection. Abundant antigen target of host humoral immune response. The chain is Cell wall mannoprotein 1 from Talaromyces marneffei (Penicillium marneffei).